The following is a 360-amino-acid chain: TIMELESS-interacting protein (360 aa).

Disordered regions lie at residues 1–80 (MMDP…QRLA), 178–199 (PSEDFSFPDELHVPSPSQPVKV), 220–246 (RMEKMQAQAESQALSQATQSDPNEIPD), and 289–360 (QDVS…KEEY). The segment covering 34 to 48 (ADDEAEDVANGDDWT) has biased composition (acidic residues). Basic residues predominate over residues 62–71 (PARRVVKRPQ). Residues 74 to 150 (LDGQRLASQR…KEVQTCLKKI (77 aa)) are interaction with TIMELESS. Residues 225–239 (QAQAESQALSQATQS) show a composition bias toward low complexity.

Belongs to the CSM3 family. As to quaternary structure, interacts with timeless, which impairs timeless self-association.

It localises to the cytoplasm. The protein localises to the nucleus. Plays an important role in the control of DNA replication and the maintenance of replication fork stability. Important for cell survival after DNA damage or replication stress. May be required for the replication checkpoint induced by hydroxyurea or ultraviolet light. The polypeptide is TIMELESS-interacting protein (tipin) (Xenopus laevis (African clawed frog)).